A 556-amino-acid polypeptide reads, in one-letter code: Oxygen-dependent choline dehydrogenase (556 aa).

An FAD-binding site is contributed by 4-33; it reads DYIIIGAGSAGNVLATRLTEDPNTSVLLLE. The Proton acceptor role is filled by His473.

This sequence belongs to the GMC oxidoreductase family. Requires FAD as cofactor.

The enzyme catalyses choline + A = betaine aldehyde + AH2. The catalysed reaction is betaine aldehyde + NAD(+) + H2O = glycine betaine + NADH + 2 H(+). It participates in amine and polyamine biosynthesis; betaine biosynthesis via choline pathway; betaine aldehyde from choline (cytochrome c reductase route): step 1/1. Functionally, involved in the biosynthesis of the osmoprotectant glycine betaine. Catalyzes the oxidation of choline to betaine aldehyde and betaine aldehyde to glycine betaine at the same rate. In Escherichia coli (strain K12 / DH10B), this protein is Oxygen-dependent choline dehydrogenase.